Reading from the N-terminus, the 213-residue chain is Small ribosomal subunit protein uS4 (213 aa).

A disordered region spans residues 16 to 53 (GTDLGLKSGVKPYDVKTKKSARPPGQHGVSRNKSSEYS). The segment covering 44 to 53 (VSRNKSSEYS) has biased composition (polar residues). Positions 97-163 (SRLDNVVYRM…EKSREQLRIK (67 aa)) constitute an S4 RNA-binding domain.

Belongs to the universal ribosomal protein uS4 family. In terms of assembly, part of the 30S ribosomal subunit. Contacts protein S5. The interaction surface between S4 and S5 is involved in control of translational fidelity.

Functionally, one of the primary rRNA binding proteins, it binds directly to 16S rRNA where it nucleates assembly of the body of the 30S subunit. Its function is as follows. With S5 and S12 plays an important role in translational accuracy. This is Small ribosomal subunit protein uS4 from Psychrobacter arcticus (strain DSM 17307 / VKM B-2377 / 273-4).